A 730-amino-acid polypeptide reads, in one-letter code: Polyribonucleotide nucleotidyltransferase (730 aa).

The Mg(2+) site is built by D489 and D495. Residues 556–615 (PRIEVMKIAVDKIREVIGSGGKVIREIVEKTGAKINIEDDGTIKIASASGDAIKAAINWI) enclose the KH domain. The 69-residue stretch at 625 to 693 (GQIYEGTVVK…ERGKTRLSMK (69 aa)) folds into the S1 motif domain. The disordered stretch occupies residues 700-730 (GEDLEAKAKAERDAARAAAPAATGDEAGAAE). The span at 703–714 (LEAKAKAERDAA) shows a compositional bias: basic and acidic residues. The segment covering 715–730 (RAAAPAATGDEAGAAE) has biased composition (low complexity).

This sequence belongs to the polyribonucleotide nucleotidyltransferase family. It depends on Mg(2+) as a cofactor.

It is found in the cytoplasm. The enzyme catalyses RNA(n+1) + phosphate = RNA(n) + a ribonucleoside 5'-diphosphate. Its function is as follows. Involved in mRNA degradation. Catalyzes the phosphorolysis of single-stranded polyribonucleotides processively in the 3'- to 5'-direction. This Xanthobacter autotrophicus (strain ATCC BAA-1158 / Py2) protein is Polyribonucleotide nucleotidyltransferase.